Here is a 23-residue protein sequence, read N- to C-terminus: Dahlein-4.2 (23 aa).

As to expression, expressed by the skin dorsal glands.

Its subcellular location is the secreted. Has no antimicrobial activity. The protein is Dahlein-4.2 of Ranoidea dahlii (Dahl's aquatic frog).